A 508-amino-acid polypeptide reads, in one-letter code: Glucose-1-phosphate adenylyltransferase small subunit 1, chloroplastic (508 aa).

The segment at 1 to 27 is disordered; the sequence is MSSIVTSGVINVPRSSSSSKNLSFSSS. The transit peptide at 1 to 59 directs the protein to the chloroplast; the sequence is MSSIVTSGVINVPRSSSSSKNLSFSSSSQLSGNKILTVSGNGAPRGRCTLKHVFLTPKA. Residues 15–27 show a composition bias toward low complexity; it reads SSSSSKNLSFSSS.

The protein belongs to the bacterial/plant glucose-1-phosphate adenylyltransferase family. As to quaternary structure, heterotetramer. As to expression, seeds.

Its subcellular location is the plastid. It localises to the chloroplast. The catalysed reaction is alpha-D-glucose 1-phosphate + ATP + H(+) = ADP-alpha-D-glucose + diphosphate. The protein operates within glycan biosynthesis; starch biosynthesis. Its activity is regulated as follows. Activated by 3'phosphoglycerate, inhibited by orthophosphate. Allosteric regulation. This protein plays a role in synthesis of starch. It catalyzes the synthesis of the activated glycosyl donor, ADP-glucose from Glc-1-P and ATP. The chain is Glucose-1-phosphate adenylyltransferase small subunit 1, chloroplastic (AGPC) from Vicia faba (Broad bean).